A 227-amino-acid polypeptide reads, in one-letter code: Ribonuclease 3 (227 aa).

Residues Phe4–Asn133 form the RNase III domain. A Mg(2+)-binding site is contributed by Glu46. The active site involves Asp50. Residues Asn119 and Glu122 each coordinate Mg(2+). Glu122 is a catalytic residue. The DRBM domain maps to Asp158 to Asn226.

It belongs to the ribonuclease III family. In terms of assembly, homodimer. Requires Mg(2+) as cofactor.

It is found in the cytoplasm. The enzyme catalyses Endonucleolytic cleavage to 5'-phosphomonoester.. Functionally, digests double-stranded RNA. Involved in the processing of primary rRNA transcript to yield the immediate precursors to the large and small rRNAs (23S and 16S). Processes some mRNAs, and tRNAs when they are encoded in the rRNA operon. Processes pre-crRNA and tracrRNA of type II CRISPR loci if present in the organism. The protein is Ribonuclease 3 of Rickettsia typhi (strain ATCC VR-144 / Wilmington).